We begin with the raw amino-acid sequence, 443 residues long: Differentially expressed in FDCP 8 homolog B (443 aa).

The segment at 14–49 is disordered; sequence HLNPFDKKGGAERHPADSETQPCKDSSTSSPLSVPE. The span at 17–30 shows a compositional bias: basic and acidic residues; that stretch reads PFDKKGGAERHPAD. Over residues 31–45 the composition is skewed to polar residues; sequence SETQPCKDSSTSSPL. 2 consecutive Phorbol-ester/DAG-type zinc fingers follow at residues 134 to 185 and 364 to 424; these read EHRF…TKPC and IHTT…STSC.

Belongs to the DEF8 family.

Functionally, positively regulates lysosome peripheral distribution and ruffled border formation in osteoclasts. Involved in bone resorption. This is Differentially expressed in FDCP 8 homolog B (def8-b) from Xenopus laevis (African clawed frog).